Reading from the N-terminus, the 167-residue chain is Transcription factor 24 (167 aa).

Low complexity predominate over residues 1–23; sequence MDRGRPAGSPLSASAEPAPLAAA. Positions 1-60 are disordered; sequence MDRGRPAGSPLSASAEPAPLAAAIRDSRPGRTGPGPAGPGGGSRSGSGRPAAANAARERS. Residues 32-45 are compositionally biased toward gly residues; it reads TGPGPAGPGGGSRS. Low complexity predominate over residues 46 to 55; that stretch reads GSGRPAAANA. Residues 49 to 101 form the bHLH domain; that stretch reads RPAAANAARERSRVQTLRHAFLELQRTLPSVPPDTKLSKLDVLLLATTYIAHL.

As to quaternary structure, efficient DNA binding requires dimerization with another bHLH protein.

It localises to the nucleus. Its function is as follows. Putative transcription factor. The chain is Transcription factor 24 (TCF24) from Homo sapiens (Human).